The following is a 309-amino-acid chain: Taste receptor type 2 member 20 (309 aa).

At 1–6 the chain is on the extracellular side; sequence MMSFLH. The chain crosses the membrane as a helical span at residues 7-27; sequence IVFSILVVVAFILGNFANGFI. Residues 28–46 are Cytoplasmic-facing; the sequence is ALINFIAWVKRQKISSADQ. Residues 47-67 traverse the membrane as a helical segment; it reads IIAALAVSRVGLLWVILLHWY. Over 68–79 the chain is Extracellular; it reads STVLNPTSSNLK. Residues 80-100 traverse the membrane as a helical segment; sequence VTIFISNAWAVTNHFSIWLAA. Residues 101 to 125 lie on the Cytoplasmic side of the membrane; that stretch reads SLSIFYLLKIVNFSRLIFHHLKRKA. Residues 126 to 146 form a helical membrane-spanning segment; it reads KSVVLVIVLGSLFFLVCHLVM. The Extracellular portion of the chain corresponds to 147–178; sequence KSTYINVWTEEYEGNVTWKIKLRNAMHLSNLT. Asn-161 and Asn-176 each carry an N-linked (GlcNAc...) asparagine glycan. Residues 179 to 199 form a helical membrane-spanning segment; that stretch reads VAMLANLIPFTLTLISFLLLI. Over 200 to 229 the chain is Cytoplasmic; sequence YSLCKHLKKMQLHGKGSQDPSTKIHIKALQ. The helical transmembrane segment at 230–250 threads the bilayer; sequence TVTSFLILLAIYFLCLITSFW. The Extracellular segment spans residues 251–259; sequence NSKMRPKEI. A helical membrane pass occupies residues 260 to 280; that stretch reads VLMLCQAFGIIYPSFHSFILI. At 281–309 the chain is on the cytoplasmic side; it reads WGNKTLKQTFLSVLWRVTCWAKGQNQSTP.

This sequence belongs to the G-protein coupled receptor T2R family.

It localises to the membrane. Its function is as follows. Receptor that may play a role in the perception of bitterness and is gustducin-linked. May play a role in sensing the chemical composition of the gastrointestinal content. The activity of this receptor may stimulate alpha gustducin, mediate PLC-beta-2 activation and lead to the gating of TRPM5. The protein is Taste receptor type 2 member 20 (TAS2R20) of Gorilla gorilla gorilla (Western lowland gorilla).